The sequence spans 340 residues: Beta-1,3-N-acetylglucosaminyltransferase radical fringe (340 aa).

Residues 1-4 are Cytoplasmic-facing; that stretch reads MKIT. The chain crosses the membrane as a helical; Signal-anchor for type II membrane protein span at residues 5-25; sequence YVGLIKVCFLVFLLLCATVLL. At 26-340 the chain is on the lumenal side; it reads NISWRQRDSS…AFSLAEDPTR (315 aa). Asn-42 carries an N-linked (GlcNAc...) asparagine glycan. Arg-110 contributes to the substrate binding site. Asn-149 carries N-linked (GlcNAc...) asparagine glycosylation. 2 disulfides stabilise this stretch: Cys-150/Cys-161 and Cys-179/Cys-242. Asp-183 is a substrate binding site. Asp-184 provides a ligand contact to Mn(2+). Asp-272 is a catalytic residue. Position 296 (His-296) interacts with Mn(2+).

It belongs to the glycosyltransferase 31 family. Mn(2+) serves as cofactor.

It is found in the golgi apparatus membrane. It carries out the reaction 3-O-(alpha-L-fucosyl)-L-threonyl-[EGF-like domain protein] + UDP-N-acetyl-alpha-D-glucosamine = 3-O-(N-acetyl-beta-D-glucosaminyl-(1-&gt;3)-alpha-L-fucosyl)-L-threonyl-[EGF-like domain protein] + UDP + H(+). The catalysed reaction is 3-O-(alpha-L-fucosyl)-L-seryl-[EGF-like domain protein] + UDP-N-acetyl-alpha-D-glucosamine = 3-O-(N-acetyl-beta-D-glucosaminyl-(1-&gt;3)-alpha-L-fucosyl)-L-seryl-[EGF-like domain protein] + UDP + H(+). Its function is as follows. Glycosyltransferase that initiates the elongation of O-linked fucose residues attached to EGF-like repeats in the extracellular domain of Notch molecules. This is Beta-1,3-N-acetylglucosaminyltransferase radical fringe (rfng) from Xenopus laevis (African clawed frog).